A 317-amino-acid polypeptide reads, in one-letter code: Olfactory receptor 2F2 (317 aa).

The Extracellular segment spans residues 1–25 (MEIDNQTWVREFILLGLSSDWCTQI). N-linked (GlcNAc...) asparagine glycosylation occurs at N5. A helical membrane pass occupies residues 26-49 (SLFSLFLVTYLMTVLGNCLIVLLI). The Cytoplasmic segment spans residues 50-57 (RLDSRLHT). A helical membrane pass occupies residues 58–79 (PMYFFLTNLSLVDVSYATSVVP). The Extracellular segment spans residues 80–100 (QLLAHFLAEHKAIPFQSCAAQ). A disulfide bridge links C97 with C189. Residues 101 to 120 (LFFSLALGGIEFVLLAVMAY) traverse the membrane as a helical segment. The Cytoplasmic segment spans residues 121–139 (DRHVAVSDRLRYSAIMHGG). The helical transmembrane segment at 140–158 (LCARLAITSWVSGSINSLV) threads the bilayer. The Extracellular portion of the chain corresponds to 159-195 (QTAITFQLPMCTNKFIDHISCELLAVVRLACVDTSSN). The chain crosses the membrane as a helical span at residues 196-219 (EAAIMVSSIVLLMTPFCLVLLSYI). The Cytoplasmic portion of the chain corresponds to 220-236 (RIISTILKIQSREGRKK). Residues 237–259 (AFHTCASHLTVVALCYGTTIFTY) traverse the membrane as a helical segment. The Extracellular portion of the chain corresponds to 260–272 (IQPHSGPSVLQEK). A helical membrane pass occupies residues 273–292 (LISVFYAIVMPLLNPVIYSL). At 293–317 (RNKEVKGAWHKLLEKFSGLTSKLGT) the chain is on the cytoplasmic side.

This sequence belongs to the G-protein coupled receptor 1 family.

Its subcellular location is the cell membrane. In terms of biological role, odorant receptor. This is Olfactory receptor 2F2 (OR2F2) from Homo sapiens (Human).